The chain runs to 123 residues: Small ribosomal subunit protein uS12 (123 aa).

The disordered stretch occupies residues 1 to 25; it reads MPTINQLVRKPRKSRSALNKAPALQ. At Asp90 the chain carries 3-methylthioaspartic acid.

Belongs to the universal ribosomal protein uS12 family. In terms of assembly, part of the 30S ribosomal subunit. Contacts proteins S8 and S17. May interact with IF1 in the 30S initiation complex.

With S4 and S5 plays an important role in translational accuracy. In terms of biological role, interacts with and stabilizes bases of the 16S rRNA that are involved in tRNA selection in the A site and with the mRNA backbone. Located at the interface of the 30S and 50S subunits, it traverses the body of the 30S subunit contacting proteins on the other side and probably holding the rRNA structure together. The combined cluster of proteins S8, S12 and S17 appears to hold together the shoulder and platform of the 30S subunit. In Ehrlichia canis (strain Jake), this protein is Small ribosomal subunit protein uS12.